A 119-amino-acid chain; its full sequence is Large ribosomal subunit protein bL20 (119 aa).

This sequence belongs to the bacterial ribosomal protein bL20 family.

In terms of biological role, binds directly to 23S ribosomal RNA and is necessary for the in vitro assembly process of the 50S ribosomal subunit. It is not involved in the protein synthesizing functions of that subunit. The protein is Large ribosomal subunit protein bL20 of Streptococcus equi subsp. equi (strain 4047).